Here is a 213-residue protein sequence, read N- to C-terminus: MAVFKAITTEQVEILTAGLYAGVDEVGRGPLVGNVVTAAVILDPTKPITGLNDSKKLSEKKREALFTEIHEKALAISIGYASPEEIDELNILHATMLAMQRAVAGLDMAPTSVLVDGNRTPDFSHGEDTDRNIESHAIIKGDGLVAGISAASIVAKVIRDREMDLLDMEHPQYGFAKHKGYPTKAHFEALALHGVLPEHRKSFRPVKERLAKN.

Residues Gly18–Asn213 form the RNase H type-2 domain. Asp24, Glu25, and Asp116 together coordinate a divalent metal cation.

It belongs to the RNase HII family. Mn(2+) serves as cofactor. Requires Mg(2+) as cofactor.

It is found in the cytoplasm. The enzyme catalyses Endonucleolytic cleavage to 5'-phosphomonoester.. Endonuclease that specifically degrades the RNA of RNA-DNA hybrids. This chain is Ribonuclease HII, found in Shewanella sediminis (strain HAW-EB3).